The chain runs to 205 residues: Dephospho-CoA kinase (205 aa).

In terms of domain architecture, DPCK spans 15–205 (VIGLTGGIAT…VERALDQASI (191 aa)). 23–28 (ATGKST) contributes to the ATP binding site.

The protein belongs to the CoaE family.

It localises to the cytoplasm. The enzyme catalyses 3'-dephospho-CoA + ATP = ADP + CoA + H(+). The protein operates within cofactor biosynthesis; coenzyme A biosynthesis; CoA from (R)-pantothenate: step 5/5. Functionally, catalyzes the phosphorylation of the 3'-hydroxyl group of dephosphocoenzyme A to form coenzyme A. The polypeptide is Dephospho-CoA kinase (Gloeobacter violaceus (strain ATCC 29082 / PCC 7421)).